The sequence spans 485 residues: WD repeat-containing protein 13 (485 aa).

M1 carries the N-acetylmethionine modification. A phosphoserine mark is found at S70, S74, and S79. Asymmetric dimethylarginine; alternate is present on R114. Omega-N-methylarginine; alternate is present on R114. WD repeat units lie at residues 162–202 (GMYH…LCQL), 208–246 (TVLR…IWAS), 250–290 (RCIR…VMNI), 295–335 (KVKG…LFDM), 341–389 (TKAK…VVDN), 394–438 (QLKR…FFDV), and 444–482 (AAVN…VWRR).

As to expression, widely expressed.

It localises to the nucleus. This is WD repeat-containing protein 13 (WDR13) from Homo sapiens (Human).